A 322-amino-acid chain; its full sequence is Eukaryotic translation initiation factor 3 subunit I (322 aa).

WD repeat units follow at residues 4-43 (GHER…RLGT), 46-85 (GHQG…VIAS), 141-180 (MVES…KVVD), 184-223 (DHTA…CLKT), and 281-322 (GHFG…NIFE).

Belongs to the eIF-3 subunit I family. As to quaternary structure, component of the eukaryotic translation initiation factor 3 (eIF-3) complex. The eIF-3 complex interacts with pix.

It is found in the cytoplasm. Its function is as follows. Component of the eukaryotic translation initiation factor 3 (eIF-3) complex, which is involved in protein synthesis of a specialized repertoire of mRNAs and, together with other initiation factors, stimulates binding of mRNA and methionyl-tRNAi to the 40S ribosome. The eIF-3 complex specifically targets and initiates translation of a subset of mRNAs involved in cell proliferation. This is Eukaryotic translation initiation factor 3 subunit I from Drosophila mojavensis (Fruit fly).